The following is a 333-amino-acid chain: tRNA N6-adenosine threonylcarbamoyltransferase (333 aa).

The Fe cation site is built by H111 and H115. Residues 134–138 (VVSGG), D167, G180, D184, and N273 each bind substrate. Residue D302 participates in Fe cation binding.

The protein belongs to the KAE1 / TsaD family. The cofactor is Fe(2+).

The protein localises to the cytoplasm. It carries out the reaction L-threonylcarbamoyladenylate + adenosine(37) in tRNA = N(6)-L-threonylcarbamoyladenosine(37) in tRNA + AMP + H(+). Required for the formation of a threonylcarbamoyl group on adenosine at position 37 (t(6)A37) in tRNAs that read codons beginning with adenine. Is involved in the transfer of the threonylcarbamoyl moiety of threonylcarbamoyl-AMP (TC-AMP) to the N6 group of A37, together with TsaE and TsaB. TsaD likely plays a direct catalytic role in this reaction. This is tRNA N6-adenosine threonylcarbamoyltransferase from Anaeromyxobacter sp. (strain Fw109-5).